We begin with the raw amino-acid sequence, 83 residues long: Small ribosomal subunit protein bS16 (83 aa).

The protein belongs to the bacterial ribosomal protein bS16 family.

In Verminephrobacter eiseniae (strain EF01-2), this protein is Small ribosomal subunit protein bS16.